A 955-amino-acid polypeptide reads, in one-letter code: Vacuolar membrane protease (955 aa).

At 1 to 16 the chain is on the cytoplasmic side; it reads MASLRLPRANPLAFTR. The helical transmembrane segment at 17 to 37 threads the bilayer; the sequence is WPVTVITAIVYLALLIPLLVV. Residues 38-390 lie on the Vacuolar side of the membrane; sequence HHVVPSAPSS…STFVLFQLHT (353 aa). N-linked (GlcNAc...) asparagine glycans are attached at residues Asn-53 and Asn-119. 2 residues coordinate Zn(2+): His-174 and Asp-186. Glu-220 serves as the catalytic Proton acceptor. 3 residues coordinate Zn(2+): Glu-221, Glu-246, and His-319. Residues 391–411 form a helical membrane-spanning segment; the sequence is LFALLVTLLIVGPLTLLFTSI. Residues 412-442 lie on the Cytoplasmic side of the membrane; it reads ALTKADKMYLFRSSAKSEDRLDVVPLQGLRG. Residues 443–463 form a helical membrane-spanning segment; that stretch reads FFRFPFLFGIPTVVTVGLAYL. Residues 464-473 lie on the Vacuolar side of the membrane; it reads VTKVNPYIIH. Residues 474 to 494 traverse the membrane as a helical segment; sequence SSAYAVWSMMVAAWVFLAWFV. Topologically, residues 495–508 are cytoplasmic; sequence SRVADFARPSAFHR. Residues 509–529 traverse the membrane as a helical segment; sequence IYTLTWMYVLSWVSAVIATVY. At 530 to 533 the chain is on the vacuolar side; it reads ANQR. The helical transmembrane segment at 534-554 threads the bilayer; sequence GLAGGYFIFFFHAGIFLAKWI. Topologically, residues 555-656 are cytoplasmic; that stretch reads SYLELFALPS…WSYALPKWTW (102 aa). Over residues 574–590 the composition is skewed to low complexity; it reads SASGRASGHGSRRGTTS. The interval 574 to 611 is disordered; that stretch reads SASGRASGHGSRRGTTSGEDDGEEAEEEPTESTSLLGS. Residues 591-603 show a composition bias toward acidic residues; sequence GEDDGEEAEEEPT. A helical membrane pass occupies residues 657–677; sequence VLQLLLTAPITLIMVGPLALL. At 678-693 the chain is on the vacuolar side; it reads TISAISQTGQDGGHPL. A helical transmembrane segment spans residues 694 to 714; that stretch reads FAYVAIAIFTTIMLTPLLPFI. The Cytoplasmic segment spans residues 715–721; it reads HRYTYHV. A helical membrane pass occupies residues 722–742; it reads PLFLLAVFLGTLIYNLVAFPF. The Vacuolar segment spans residues 743–955; that stretch reads SDSNRLKLYY…RRAFEIGNDD (213 aa). Asn-826 is a glycosylation site (N-linked (GlcNAc...) asparagine).

It belongs to the peptidase M28 family. It depends on Zn(2+) as a cofactor.

Its subcellular location is the vacuole membrane. In terms of biological role, may be involved in vacuolar sorting and osmoregulation. The chain is Vacuolar membrane protease from Aspergillus oryzae (strain ATCC 42149 / RIB 40) (Yellow koji mold).